The primary structure comprises 77 residues: Apidermin 2 (77 aa).

A signal peptide spans 1 to 16 (MKSLLILFAIVAVVAA).

Expressed in the epidermis, hypopharyngeal glands, fat body, trachea, esophagus and stomach.

The protein resides in the secreted. In terms of biological role, antimicrobial peptide that binds cell wall carbohydrates of microbial symbionts and induces structural damage. Binds the cell wall carbohydrates mannan, N-acetyl-D-glucosamine and lipopolysaccharide. Can target fungi, Gram-negative and Gram-positive bacteria. The polypeptide is Apidermin 2 (Apis mellifera (Honeybee)).